Here is a 373-residue protein sequence, read N- to C-terminus: Secondary metabolism regulator laeA (373 aa).

Disordered regions lie at residues M1 to V21 and A53 to R81. The span at G67–K77 shows a compositional bias: polar residues.

It belongs to the methyltransferase superfamily. LaeA methyltransferase family. In terms of assembly, component of the heterotrimeric velvet complex composed of laeA, veA and velB; VeA acting as a bridging protein between laeA and velB.

It is found in the nucleus. The enzyme catalyses L-methionyl-[protein] + S-adenosyl-L-methionine = S-methyl-L-methionyl-[protein] + S-adenosyl-L-homocysteine. Functionally, methyltransferase that performs automethylation. No other methyl-accepting substrate has been identified yet. Component of the velvet transcription factor complex that acts as a global regulator for secondary metabolite gene expression. Controls the expression of the cyclopiazonic acid (CPA) gene clusters. Regulates also pigmentation and conidial head morphology. The chain is Secondary metabolism regulator laeA from Aspergillus fumisynnematus.